We begin with the raw amino-acid sequence, 109 residues long: Nucleoid-associated protein LBUL_1514 (109 aa).

Belongs to the YbaB/EbfC family. Homodimer.

It localises to the cytoplasm. The protein localises to the nucleoid. Binds to DNA and alters its conformation. May be involved in regulation of gene expression, nucleoid organization and DNA protection. The protein is Nucleoid-associated protein LBUL_1514 of Lactobacillus delbrueckii subsp. bulgaricus (strain ATCC BAA-365 / Lb-18).